Consider the following 489-residue polypeptide: MFS-type transporter MFS19 (489 aa).

The segment covering 1-12 has biased composition (basic and acidic residues); the sequence is MAHSTAGDRDPE. The tract at residues 1-42 is disordered; sequence MAHSTAGDRDPEVGSEQHSSIAQLHTESMSDPWGDSNSPENP. A compositionally biased stretch (polar residues) spans 16–41; sequence EQHSSIAQLHTESMSDPWGDSNSPEN. A helical transmembrane segment spans residues 52-72; sequence FHVAIVSIFTLTANLAATMFA. Asn83 and Asn86 each carry an N-linked (GlcNAc...) asparagine glycan. The next 11 membrane-spanning stretches (helical) occupy residues 91-111, 127-147, 149-169, 180-200, 208-228, 282-302, 321-341, 361-381, 388-408, 425-445, and 454-474; these read AMTV…LAPL, VYIA…FLVF, FLCG…VADI, ALFA…GGYV, WTFR…MFFM, PIVL…FLLF, GLAY…FSIL, LILM…YGWS, WIVP…VVIP, ALAA…LVAA, and GWGN…PWLF.

The protein belongs to the major facilitator superfamily.

It is found in the cell membrane. In terms of biological role, MFS-type efflux pump involved in the modulation susceptibility to various compounds including cumyl hydroperoxide, potassium superoxide, many singlet oxygen-generating compounds (eosin Y, rose Bengal, hematoporphyrin, methylene blue, and cercosporin), and the cell wall biosynthesis inhibitor Congo red. Involved in oxidative stress tolerance, colonization, and lesion formation. This chain is MFS-type transporter MFS19, found in Alternaria alternata (Alternaria rot fungus).